Here is a 90-residue protein sequence, read N- to C-terminus: Probable Fe(2+)-trafficking protein (90 aa).

It belongs to the Fe(2+)-trafficking protein family.

Could be a mediator in iron transactions between iron acquisition and iron-requiring processes, such as synthesis and/or repair of Fe-S clusters in biosynthetic enzymes. In Cupriavidus taiwanensis (strain DSM 17343 / BCRC 17206 / CCUG 44338 / CIP 107171 / LMG 19424 / R1) (Ralstonia taiwanensis (strain LMG 19424)), this protein is Probable Fe(2+)-trafficking protein.